A 314-amino-acid polypeptide reads, in one-letter code: tRNA pseudouridine synthase B (314 aa).

The active-site Nucleophile is the Asp47.

It belongs to the pseudouridine synthase TruB family. Type 1 subfamily.

The enzyme catalyses uridine(55) in tRNA = pseudouridine(55) in tRNA. Its function is as follows. Responsible for synthesis of pseudouridine from uracil-55 in the psi GC loop of transfer RNAs. The chain is tRNA pseudouridine synthase B from Vibrio campbellii (strain ATCC BAA-1116).